Reading from the N-terminus, the 246-residue chain is Probable transcriptional regulatory protein CGSHiEE_01480 (246 aa).

It belongs to the TACO1 family.

The protein resides in the cytoplasm. This Haemophilus influenzae (strain PittEE) protein is Probable transcriptional regulatory protein CGSHiEE_01480.